Reading from the N-terminus, the 67-residue chain is Large ribosomal subunit protein uL29 (67 aa).

This sequence belongs to the universal ribosomal protein uL29 family.

This Exiguobacterium sp. (strain ATCC BAA-1283 / AT1b) protein is Large ribosomal subunit protein uL29.